The following is a 423-amino-acid chain: Protein CLP1 homolog (423 aa).

ATP is bound by residues Glu16, Lys57, and 119-124; that span reads DVGKST.

It belongs to the Clp1 family. Clp1 subfamily.

Its subcellular location is the nucleus. Its function is as follows. Required for endonucleolytic cleavage during polyadenylation-dependent pre-mRNA 3'-end formation. The chain is Protein CLP1 homolog (cbc) from Drosophila sechellia (Fruit fly).